The primary structure comprises 512 residues: Maturase K (512 aa).

Belongs to the intron maturase 2 family. MatK subfamily.

It is found in the plastid. The protein localises to the chloroplast. Functionally, usually encoded in the trnK tRNA gene intron. Probably assists in splicing its own and other chloroplast group II introns. This Lilium canadense (Canada lily) protein is Maturase K.